The sequence spans 478 residues: Cytochrome c-552 (478 aa).

An N-terminal signal peptide occupies residues 1–26 (MARKTLRARRFFSLIFPFFFITSVYA). His94 serves as a coordination point for heme c. Residues Cys122, Cys125, and Lys126 each coordinate heme. Heme c contacts are provided by Cys160, Cys163, His164, Cys209, Cys212, and His213. Ca(2+) is bound by residues Glu215, Tyr216, Lys261, and Gln263. Position 216 (Tyr216) interacts with substrate. Position 264 (His264) interacts with substrate. 9 residues coordinate heme c: His275, Cys282, Cys285, His286, His301, Cys314, Cys317, His318, and His393.

The protein belongs to the cytochrome c-552 family. Requires Ca(2+) as cofactor. The cofactor is heme c.

The protein resides in the periplasm. The enzyme catalyses 6 Fe(III)-[cytochrome c] + NH4(+) + 2 H2O = 6 Fe(II)-[cytochrome c] + nitrite + 8 H(+). Its pathway is nitrogen metabolism; nitrate reduction (assimilation). Functionally, catalyzes the reduction of nitrite to ammonia, consuming six electrons in the process. The chain is Cytochrome c-552 from Salmonella dublin (strain CT_02021853).